Reading from the N-terminus, the 192-residue chain is Ribosomal RNA small subunit methyltransferase G (192 aa).

S-adenosyl-L-methionine is bound by residues Gly63, Leu68, Ile112–Glu113, and Arg125.

This sequence belongs to the methyltransferase superfamily. RNA methyltransferase RsmG family.

It localises to the cytoplasm. It carries out the reaction guanosine(527) in 16S rRNA + S-adenosyl-L-methionine = N(7)-methylguanosine(527) in 16S rRNA + S-adenosyl-L-homocysteine. In terms of biological role, specifically methylates the N7 position of guanine in position 527 of 16S rRNA. This is Ribosomal RNA small subunit methyltransferase G from Rickettsia rickettsii (strain Iowa).